The primary structure comprises 163 residues: Ribosome maturation factor RimP (163 aa).

It belongs to the RimP family.

The protein resides in the cytoplasm. Functionally, required for maturation of 30S ribosomal subunits. The sequence is that of Ribosome maturation factor RimP from Streptococcus thermophilus (strain CNRZ 1066).